Here is a 180-residue protein sequence, read N- to C-terminus: NAD(P)H-quinone oxidoreductase subunit I, chloroplastic (180 aa).

4Fe-4S ferredoxin-type domains lie at 55–84 (GRIH…VDWR) and 95–124 (LNYS…MTEE). Residues C64, C67, C70, C74, C104, C107, C110, and C114 each contribute to the [4Fe-4S] cluster site.

This sequence belongs to the complex I 23 kDa subunit family. In terms of assembly, NDH is composed of at least 16 different subunits, 5 of which are encoded in the nucleus. [4Fe-4S] cluster serves as cofactor.

It localises to the plastid. It is found in the chloroplast thylakoid membrane. The enzyme catalyses a plastoquinone + NADH + (n+1) H(+)(in) = a plastoquinol + NAD(+) + n H(+)(out). It carries out the reaction a plastoquinone + NADPH + (n+1) H(+)(in) = a plastoquinol + NADP(+) + n H(+)(out). Functionally, NDH shuttles electrons from NAD(P)H:plastoquinone, via FMN and iron-sulfur (Fe-S) centers, to quinones in the photosynthetic chain and possibly in a chloroplast respiratory chain. The immediate electron acceptor for the enzyme in this species is believed to be plastoquinone. Couples the redox reaction to proton translocation, and thus conserves the redox energy in a proton gradient. The polypeptide is NAD(P)H-quinone oxidoreductase subunit I, chloroplastic (Hordeum vulgare (Barley)).